The primary structure comprises 575 residues: GBF-interacting protein 1-like (575 aa).

2 disordered regions span residues 66–171 and 229–296; these read SKRE…SKSD and SSSN…VVHS. Polar residues-rich tracts occupy residues 90–102, 115–138, and 161–171; these read FASS…SGRN, TRGS…NETK, and ISASRCSSKSD. Residues 268 to 281 show a composition bias toward basic and acidic residues; that stretch reads AREETSTVSEDKDY.

It belongs to the GIP1 family. As to expression, expressed in roots, leaves, stems and flowers.

Its subcellular location is the nucleus. May act as a transcriptional coactivator of LOB domain-containing proteins. The sequence is that of GBF-interacting protein 1-like from Arabidopsis thaliana (Mouse-ear cress).